The chain runs to 220 residues: Adenylate kinase (220 aa).

Position 10 to 15 (10 to 15) interacts with ATP; that stretch reads GAGKGT. The tract at residues 30 to 59 is NMP; the sequence is STGDMLRAAVKAGTPLGLKAKEVMDGGNLV. AMP contacts are provided by residues Thr31, Arg36, 57–59, 85–88, and Gln92; these read NLV and GFPR. The LID stretch occupies residues 122 to 159; that stretch reads GRRVHPASGRTYHIRFNPPQTAGMDDETGEPLVQRADD. ATP contacts are provided by residues Arg123 and 132 to 133; that span reads TY. Positions 156 and 167 each coordinate AMP. Residue Gly205 coordinates ATP.

Belongs to the adenylate kinase family. As to quaternary structure, monomer.

It localises to the cytoplasm. The enzyme catalyses AMP + ATP = 2 ADP. Its pathway is purine metabolism; AMP biosynthesis via salvage pathway; AMP from ADP: step 1/1. Functionally, catalyzes the reversible transfer of the terminal phosphate group between ATP and AMP. Plays an important role in cellular energy homeostasis and in adenine nucleotide metabolism. In Chlorobium luteolum (strain DSM 273 / BCRC 81028 / 2530) (Pelodictyon luteolum), this protein is Adenylate kinase.